The primary structure comprises 448 residues: Trigger factor (448 aa).

In terms of domain architecture, PPIase FKBP-type spans 172–257 (GDRVTVDFVG…MKKIEWPHLP (86 aa)).

The protein belongs to the FKBP-type PPIase family. Tig subfamily.

Its subcellular location is the cytoplasm. The enzyme catalyses [protein]-peptidylproline (omega=180) = [protein]-peptidylproline (omega=0). In terms of biological role, involved in protein export. Acts as a chaperone by maintaining the newly synthesized protein in an open conformation. Functions as a peptidyl-prolyl cis-trans isomerase. The sequence is that of Trigger factor from Paraburkholderia xenovorans (strain LB400).